A 112-amino-acid polypeptide reads, in one-letter code: uncharacterized protein (112 aa).

The interval 70 to 112 (GLYRGRRPPGRDAARPTTAILFAQGRPPLLDQRAPTRRGSHQR) is disordered.

This is an uncharacterized protein from Homo sapiens (Human).